The following is a 443-amino-acid chain: ATP-dependent protease ATPase subunit HslU (443 aa).

Residues isoleucine 18 and 60–65 (GVGKTE) each bind ATP. Residues 138–158 (PAENQWGEKEQNEDKGTRQTF) form a disordered region. A compositionally biased stretch (basic and acidic residues) spans 143-154 (WGEKEQNEDKGT). Residues aspartate 255, glutamate 321, and arginine 393 each contribute to the ATP site.

Belongs to the ClpX chaperone family. HslU subfamily. As to quaternary structure, a double ring-shaped homohexamer of HslV is capped on each side by a ring-shaped HslU homohexamer. The assembly of the HslU/HslV complex is dependent on binding of ATP.

The protein resides in the cytoplasm. ATPase subunit of a proteasome-like degradation complex; this subunit has chaperone activity. The binding of ATP and its subsequent hydrolysis by HslU are essential for unfolding of protein substrates subsequently hydrolyzed by HslV. HslU recognizes the N-terminal part of its protein substrates and unfolds these before they are guided to HslV for hydrolysis. This is ATP-dependent protease ATPase subunit HslU from Pseudoalteromonas atlantica (strain T6c / ATCC BAA-1087).